We begin with the raw amino-acid sequence, 279 residues long: Urease accessory protein UreD (279 aa).

This sequence belongs to the UreD family. As to quaternary structure, ureD, UreF and UreG form a complex that acts as a GTP-hydrolysis-dependent molecular chaperone, activating the urease apoprotein by helping to assemble the nickel containing metallocenter of UreC. The UreE protein probably delivers the nickel.

Its subcellular location is the cytoplasm. Functionally, required for maturation of urease via the functional incorporation of the urease nickel metallocenter. This Pseudomonas fluorescens (strain Pf0-1) protein is Urease accessory protein UreD.